Here is a 408-residue protein sequence, read N- to C-terminus: Succinylornithine transaminase (408 aa).

At Lys-252 the chain carries N6-(pyridoxal phosphate)lysine.

It belongs to the class-III pyridoxal-phosphate-dependent aminotransferase family. AstC subfamily. Requires pyridoxal 5'-phosphate as cofactor.

The enzyme catalyses N(2)-succinyl-L-ornithine + 2-oxoglutarate = N-succinyl-L-glutamate 5-semialdehyde + L-glutamate. It functions in the pathway amino-acid degradation; L-arginine degradation via AST pathway; L-glutamate and succinate from L-arginine: step 3/5. In terms of biological role, catalyzes the transamination of N(2)-succinylornithine and alpha-ketoglutarate into N(2)-succinylglutamate semialdehyde and glutamate. Can also act as an acetylornithine aminotransferase. This chain is Succinylornithine transaminase, found in Salmonella paratyphi B (strain ATCC BAA-1250 / SPB7).